We begin with the raw amino-acid sequence, 492 residues long: Fascin-2 (492 aa).

This sequence belongs to the fascin family. Exclusively expressed in the eye, specifically in photoreceptor cells.

Its subcellular location is the cytoplasm. It localises to the cytoskeleton. It is found in the cell projection. The protein localises to the stereocilium. Acts as an actin bundling protein. May play a pivotal role in photoreceptor cell-specific events, such as disk morphogenesis. This chain is Fascin-2 (FSCN2), found in Bos taurus (Bovine).